The chain runs to 173 residues: S-ribosylhomocysteine lyase (173 aa).

Positions 54, 58, and 128 each coordinate Fe cation.

This sequence belongs to the LuxS family. Homodimer. Fe cation is required as a cofactor.

It catalyses the reaction S-(5-deoxy-D-ribos-5-yl)-L-homocysteine = (S)-4,5-dihydroxypentane-2,3-dione + L-homocysteine. Its function is as follows. Involved in the synthesis of autoinducer 2 (AI-2) which is secreted by bacteria and is used to communicate both the cell density and the metabolic potential of the environment. The regulation of gene expression in response to changes in cell density is called quorum sensing. Catalyzes the transformation of S-ribosylhomocysteine (RHC) to homocysteine (HC) and 4,5-dihydroxy-2,3-pentadione (DPD). This chain is S-ribosylhomocysteine lyase, found in Hydrogenovibrio crunogenus (strain DSM 25203 / XCL-2) (Thiomicrospira crunogena).